We begin with the raw amino-acid sequence, 786 residues long: Endonuclease MutS2 (786 aa).

Position 335–342 (335–342 (GPNTGGKT)) interacts with ATP. Residues 711-786 (LDLRGERFEN…GLGVTVVELK (76 aa)) enclose the Smr domain.

Belongs to the DNA mismatch repair MutS family. MutS2 subfamily. As to quaternary structure, homodimer. Binds to stalled ribosomes, contacting rRNA.

Endonuclease that is involved in the suppression of homologous recombination and thus may have a key role in the control of bacterial genetic diversity. In terms of biological role, acts as a ribosome collision sensor, splitting the ribosome into its 2 subunits. Detects stalled/collided 70S ribosomes which it binds and splits by an ATP-hydrolysis driven conformational change. Acts upstream of the ribosome quality control system (RQC), a ribosome-associated complex that mediates the extraction of incompletely synthesized nascent chains from stalled ribosomes and their subsequent degradation. Probably generates substrates for RQC. The polypeptide is Endonuclease MutS2 (Bacillus cereus (strain Q1)).